The sequence spans 174 residues: Crossover junction endodeoxyribonuclease RuvC (174 aa).

Catalysis depends on residues Asp8, Glu69, and Asp141. Positions 8, 69, and 141 each coordinate Mg(2+).

This sequence belongs to the RuvC family. In terms of assembly, homodimer which binds Holliday junction (HJ) DNA. The HJ becomes 2-fold symmetrical on binding to RuvC with unstacked arms; it has a different conformation from HJ DNA in complex with RuvA. In the full resolvosome a probable DNA-RuvA(4)-RuvB(12)-RuvC(2) complex forms which resolves the HJ. The cofactor is Mg(2+).

Its subcellular location is the cytoplasm. It catalyses the reaction Endonucleolytic cleavage at a junction such as a reciprocal single-stranded crossover between two homologous DNA duplexes (Holliday junction).. The RuvA-RuvB-RuvC complex processes Holliday junction (HJ) DNA during genetic recombination and DNA repair. Endonuclease that resolves HJ intermediates. Cleaves cruciform DNA by making single-stranded nicks across the HJ at symmetrical positions within the homologous arms, yielding a 5'-phosphate and a 3'-hydroxyl group; requires a central core of homology in the junction. The consensus cleavage sequence is 5'-(A/T)TT(C/G)-3'. Cleavage occurs on the 3'-side of the TT dinucleotide at the point of strand exchange. HJ branch migration catalyzed by RuvA-RuvB allows RuvC to scan DNA until it finds its consensus sequence, where it cleaves and resolves the cruciform DNA. This is Crossover junction endodeoxyribonuclease RuvC from Xanthomonas oryzae pv. oryzae (strain PXO99A).